Consider the following 44-residue polypeptide: Mu-conotoxin-like Cal 12.1.3b (44 aa).

4 cysteine pairs are disulfide-bonded: C3–C16, C11–C28, C18–C33, and C27–C38. P23 is modified (4-hydroxyproline). A 6'-bromotryptophan mark is found at W36 and W37. At P39 the chain carries 4-hydroxyproline. Residue W43 is modified to 6'-bromotryptophan.

Expressed by the venom duct.

The protein localises to the secreted. Functionally, mu-conotoxins block voltage-gated sodium channels. This toxin reversibly blocks voltage-gated sodium channel in cephalopods, with no alteration in the voltage dependence of sodium conductance or on the kinetics of inactivation. In Californiconus californicus (California cone), this protein is Mu-conotoxin-like Cal 12.1.3b.